The sequence spans 209 residues: Interleukin-6 (209 aa).

Residues 1–26 (RFTSAFSPVAFSLGLLLVMATAFPTP) form the signal peptide. The segment at 28–47 (PVGGESQADATSNRPPLTSP) is disordered. A disulfide bridge links C69 with C75. S78 carries the phosphoserine modification. C98 and C108 are joined by a disulfide.

The protein belongs to the IL-6 superfamily. As to quaternary structure, component of a hexamer of two molecules each of IL6, IL6R and IL6ST; first binds to IL6R to associate with the signaling subunit IL6ST. Interacts with IL6R (via the N-terminal ectodomain); this interaction may be affected by IL6R-binding with SORL1, hence decreasing IL6 cis signaling. Interacts with SORL1 (via the N-terminal ectodomain); this interaction leads to IL6 internalization and lysosomal degradation. May form a trimeric complex with the soluble SORL1 ectodomain and soluble IL6R receptor; this interaction might stabilize circulating IL6, hence promoting IL6 trans signaling.

It localises to the secreted. Functionally, cytokine with a wide variety of biological functions in immunity, tissue regeneration, and metabolism. Binds to IL6R, then the complex associates to the signaling subunit IL6ST/gp130 to trigger the intracellular IL6-signaling pathway. The interaction with the membrane-bound IL6R and IL6ST stimulates 'classic signaling', whereas the binding of IL6 and soluble IL6R to IL6ST stimulates 'trans-signaling'. Alternatively, 'cluster signaling' occurs when membrane-bound IL6:IL6R complexes on transmitter cells activate IL6ST receptors on neighboring receiver cells. Its function is as follows. IL6 is a potent inducer of the acute phase response. Rapid production of IL6 contributes to host defense during infection and tissue injury, but excessive IL6 synthesis is involved in disease pathology. In the innate immune response, is synthesized by myeloid cells, such as macrophages and dendritic cells, upon recognition of pathogens through toll-like receptors (TLRs) at the site of infection or tissue injury. In the adaptive immune response, is required for the differentiation of B cells into immunoglobulin-secreting cells. Plays a major role in the differentiation of CD4(+) T cell subsets. Essential factor for the development of T follicular helper (Tfh) cells that are required for the induction of germinal-center formation. Required to drive naive CD4(+) T cells to the Th17 lineage. Also required for proliferation of myeloma cells and the survival of plasmablast cells. In terms of biological role, acts as an essential factor in bone homeostasis and on vessels directly or indirectly by induction of VEGF, resulting in increased angiogenesis activity and vascular permeability. Induces, through 'trans-signaling' and synergistically with IL1B and TNF, the production of VEGF. Involved in metabolic controls, is discharged into the bloodstream after muscle contraction increasing lipolysis and improving insulin resistance. 'Trans-signaling' in central nervous system also regulates energy and glucose homeostasis. Mediates, through GLP-1, crosstalk between insulin-sensitive tissues, intestinal L cells and pancreatic islets to adapt to changes in insulin demand. Also acts as a myokine. Plays a protective role during liver injury, being required for maintenance of tissue regeneration. Also has a pivotal role in iron metabolism by regulating HAMP/hepcidin expression upon inflammation or bacterial infection. Through activation of IL6ST-YAP-NOTCH pathway, induces inflammation-induced epithelial regeneration. The protein is Interleukin-6 (IL6) of Phoca vitulina (Harbor seal).